Reading from the N-terminus, the 109-residue chain is Large ribosomal subunit protein uL23 (109 aa).

The protein belongs to the universal ribosomal protein uL23 family. As to quaternary structure, part of the 50S ribosomal subunit. Contacts protein L29, and trigger factor when it is bound to the ribosome.

Its function is as follows. One of the early assembly proteins it binds 23S rRNA. One of the proteins that surrounds the polypeptide exit tunnel on the outside of the ribosome. Forms the main docking site for trigger factor binding to the ribosome. This is Large ribosomal subunit protein uL23 from Prosthecochloris aestuarii (strain DSM 271 / SK 413).